The chain runs to 246 residues: tRNA pseudouridine synthase A (246 aa).

Residue aspartate 53 is the Nucleophile of the active site. Tyrosine 111 provides a ligand contact to substrate.

This sequence belongs to the tRNA pseudouridine synthase TruA family. Homodimer.

It catalyses the reaction uridine(38/39/40) in tRNA = pseudouridine(38/39/40) in tRNA. Functionally, formation of pseudouridine at positions 38, 39 and 40 in the anticodon stem and loop of transfer RNAs. The polypeptide is tRNA pseudouridine synthase A (Lysinibacillus sphaericus (strain C3-41)).